A 355-amino-acid polypeptide reads, in one-letter code: 3-isopropylmalate dehydrogenase (355 aa).

Positions 90, 100, 128, and 222 each coordinate substrate. Residues Asp222, Asp246, and Asp250 each coordinate Mg(2+). Residue 280-292 (GSAPDIAGKGIAN) coordinates NAD(+).

The protein belongs to the isocitrate and isopropylmalate dehydrogenases family. LeuB type 1 subfamily. In terms of assembly, homodimer. Mg(2+) is required as a cofactor. Requires Mn(2+) as cofactor.

The protein resides in the cytoplasm. It catalyses the reaction (2R,3S)-3-isopropylmalate + NAD(+) = 4-methyl-2-oxopentanoate + CO2 + NADH. It functions in the pathway amino-acid biosynthesis; L-leucine biosynthesis; L-leucine from 3-methyl-2-oxobutanoate: step 3/4. In terms of biological role, catalyzes the oxidation of 3-carboxy-2-hydroxy-4-methylpentanoate (3-isopropylmalate) to 3-carboxy-4-methyl-2-oxopentanoate. The product decarboxylates to 4-methyl-2 oxopentanoate. In Burkholderia thailandensis (strain ATCC 700388 / DSM 13276 / CCUG 48851 / CIP 106301 / E264), this protein is 3-isopropylmalate dehydrogenase.